We begin with the raw amino-acid sequence, 881 residues long: Alanine--tRNA ligase (881 aa).

It belongs to the class-II aminoacyl-tRNA synthetase family.

It is found in the cytoplasm. The enzyme catalyses tRNA(Ala) + L-alanine + ATP = L-alanyl-tRNA(Ala) + AMP + diphosphate. Functionally, catalyzes the attachment of alanine to tRNA(Ala) in a two-step reaction: alanine is first activated by ATP to form Ala-AMP and then transferred to the acceptor end of tRNA(Ala). Also edits incorrectly charged Ser-tRNA(Ala) and Gly-tRNA(Ala) via its editing domain. The polypeptide is Alanine--tRNA ligase (alaS) (Lacticaseibacillus paracasei (strain ATCC 334 / BCRC 17002 / CCUG 31169 / CIP 107868 / KCTC 3260 / NRRL B-441) (Lactobacillus paracasei)).